Reading from the N-terminus, the 138-residue chain is Phosphoribosyl-AMP cyclohydrolase (138 aa).

Asp-85 is a binding site for Mg(2+). Cys-86 lines the Zn(2+) pocket. Residues Asp-87 and Asp-89 each contribute to the Mg(2+) site. Cys-102 and Cys-109 together coordinate Zn(2+).

This sequence belongs to the PRA-CH family. In terms of assembly, homodimer. Requires Mg(2+) as cofactor. Zn(2+) serves as cofactor.

Its subcellular location is the cytoplasm. The enzyme catalyses 1-(5-phospho-beta-D-ribosyl)-5'-AMP + H2O = 1-(5-phospho-beta-D-ribosyl)-5-[(5-phospho-beta-D-ribosylamino)methylideneamino]imidazole-4-carboxamide. It participates in amino-acid biosynthesis; L-histidine biosynthesis; L-histidine from 5-phospho-alpha-D-ribose 1-diphosphate: step 3/9. Its function is as follows. Catalyzes the hydrolysis of the adenine ring of phosphoribosyl-AMP. This chain is Phosphoribosyl-AMP cyclohydrolase, found in Methanothermobacter thermautotrophicus (strain ATCC 29096 / DSM 1053 / JCM 10044 / NBRC 100330 / Delta H) (Methanobacterium thermoautotrophicum).